Reading from the N-terminus, the 60-residue chain is Metallothionein B (60 aa).

The beta stretch occupies residues methionine 1 to cysteine 28. Residues cysteine 4, cysteine 6, cysteine 12, cysteine 14, cysteine 18, cysteine 20, cysteine 23, cysteine 25, cysteine 28, cysteine 32, cysteine 33, cysteine 35, cysteine 36, cysteine 40, cysteine 43, cysteine 47, cysteine 49, cysteine 54, cysteine 58, and cysteine 59 each contribute to the a divalent metal cation site. The segment at lysine 29–glutamine 60 is alpha.

Belongs to the metallothionein superfamily. Type 1 family.

Functionally, metallothioneins have a high content of cysteine residues that bind various heavy metals. This chain is Metallothionein B (mtb), found in Oncorhynchus mykiss (Rainbow trout).